Reading from the N-terminus, the 1281-residue chain is Dynactin subunit 1 (1281 aa).

Residues 1 to 26 (MAQSRRHMSSRTPSGSRMSTEASARP) are disordered. Polar residues predominate over residues 10–22 (SRTPSGSRMSTEA). The 43-residue stretch at 48–90 (GATLFATGKWVGVILDEAKGKNDGTVQGRKYFTCDEGHGIFVR) folds into the CAP-Gly domain. The interval 100–221 (GADTTSPETP…SPSKEEEGLR (122 aa)) is disordered. Residues 102 to 114 (DTTSPETPDSSAS) show a composition bias toward polar residues. Phosphothreonine is present on residues T108, T145, T146, and T147. Positions 129-152 (SKLRGLKPKKAPTARKTTTRRPKP) are enriched in basic residues. Residues 161–205 (AGPSSSLGPSGSASAGELSSSEPSTPAQTPLAAPIIPTPALTSPG) show a composition bias toward low complexity. S179 is modified (phosphoserine; by PLK1). S212 is modified (phosphoserine; by CDK1). Coiled coils occupy residues 214-547 (SKEE…RQQQ), 943-1049 (LKLE…EGLR), and 1185-1214 (SAQL…KETV). Positions 911 to 1281 (EYDAERPPSK…LHQLHSRLIS (371 aa)) are interaction with HPS6.

It belongs to the dynactin 150 kDa subunit family. Monomer and homodimer. Subunit of dynactin, a multiprotein complex part of a tripartite complex with dynein and a adapter, such as BICDL1, BICD2 or HOOK3. The dynactin complex is built around ACTR1A/ACTB filament and consists of an actin-related filament composed of a shoulder domain, a pointed end and a barbed end. Its length is defined by its flexible shoulder domain. The soulder is composed of 2 DCTN1 subunits, 4 DCTN2 and 2 DCTN3. DCTN1/p150(glued) binds directly to microtubules and to cytoplasmic dynein. The 4 DCNT2 (via N-terminus) bind the ACTR1A filament and act as molecular rulers to determine the length. The pointed end is important for binding dynein-dynactin cargo adapters. Consists of 4 subunits: ACTR10, DCNT4, DCTN5 and DCTN6. The barbed end is composed of a CAPZA1:CAPZB heterodimers, which binds ACTR1A/ACTB filament and dynactin and stabilizes dynactin. Interacts with the C-terminus of MAPRE1, MAPRE2 and MAPRE3. Interacts with FBXL5. Interacts with ECPAS. Interacts with CLIP1. Interacts with CLN3 and DYNAP. Interacts with MISP; this interaction regulates its distribution at the cell cortex. Interacts with CEP131. Interacts with CEP126. Interacts with dynein intermediate chain and dynein heavy chain. Interacts with PLK1 (via POLO-box domain). Interacts with TBCB and PARD6A. Binds preferentially to tyrosinated microtubules than to detyrosinated microtubules. Interacts with KIF3A. Interacts with HPS6. Interacts with SNX6. Interacts with BICD2. Interacts with DST (isoform 1). Identified in a complex with MREG and RILP. Interacts with BCCIP. Interacts with DCDC1. Interacts with AKNA. Interacts with DYNC1I2. Interacts with RUFY3 and RUFY4. Ubiquitinated by a SCF complex containing FBXL5, leading to its degradation by the proteasome. Post-translationally, phosphorylation by SLK at Thr-145, Thr-146 and Thr-147 targets DCTN1 to the centrosome. It is uncertain if SLK phosphorylates all three threonines or one or two of them. PLK1-mediated phosphorylation at Ser-179 is essential for its localization in the nuclear envelope and promotes its dissociation from microtubules during early mitosis and positively regulates nuclear envelope breakdown during prophase.

The protein localises to the cytoplasm. The protein resides in the cytoskeleton. It is found in the microtubule organizing center. It localises to the centrosome. Its subcellular location is the centriole. The protein localises to the spindle. The protein resides in the nucleus envelope. It is found in the cell cortex. In terms of biological role, part of the dynactin complex that activates the molecular motor dynein for ultra-processive transport along microtubules. Plays a key role in dynein-mediated retrograde transport of vesicles and organelles along microtubules by recruiting and tethering dynein to microtubules. Binds to both dynein and microtubules providing a link between specific cargos, microtubules and dynein. Essential for targeting dynein to microtubule plus ends, recruiting dynein to membranous cargos and enhancing dynein processivity (the ability to move along a microtubule for a long distance without falling off the track). Can also act as a brake to slow the dynein motor during motility along the microtubule. Can regulate microtubule stability by promoting microtubule formation, nucleation and polymerization and by inhibiting microtubule catastrophe in neurons. Inhibits microtubule catastrophe by binding both to microtubules and to tubulin, leading to enhanced microtubule stability along the axon. Plays a role in metaphase spindle orientation. Plays a role in centriole cohesion and subdistal appendage organization and function. Its recruitment to the centriole in a KIF3A-dependent manner is essential for the maintenance of centriole cohesion and the formation of subdistal appendage. Also required for microtubule anchoring at the mother centriole. Plays a role in primary cilia formation. The polypeptide is Dynactin subunit 1 (Dctn1) (Mus musculus (Mouse)).